We begin with the raw amino-acid sequence, 265 residues long: Small ribosomal subunit protein uS2 (265 aa).

This sequence belongs to the universal ribosomal protein uS2 family.

The polypeptide is Small ribosomal subunit protein uS2 (Ligilactobacillus salivarius (strain UCC118) (Lactobacillus salivarius)).